Consider the following 331-residue polypeptide: Gamma-parvin (331 aa).

Methionine 1 carries the post-translational modification N-acetylmethionine. The disordered stretch occupies residues glutamate 17–lysine 39. Calponin-homology (CH) domains lie at glutamate 44–glutamine 151 and asparagine 210–threonine 317.

It belongs to the parvin family. In terms of assembly, interacts with ILK; the interaction promotes the establishment of cell polarity required for leukocyte migration. Interacts with ARHGEF6; the guanine nucleotide exchange factor activity of ARHGEF6 is essential for the PARVG-induced enhancement of cell spreading. Expressed predominantly in lymphoid organs, including spleen, thymus, lymph node, bone marrow and peripheral blood leukocytes and moderately in the digestive tract, including stomach, duodenum, jejunum, ileum, ileocecum and appendix, as well as in lung and liver. Also expressed in tumors, but at a lower level than in the corresponding normal tissues.

It is found in the cell junction. The protein localises to the focal adhesion. Its subcellular location is the cell membrane. It localises to the cytoplasm. The protein resides in the cytoskeleton. In terms of biological role, plays a role with ILK in promoting the cell adhesion and spreading of leukocytes. The protein is Gamma-parvin (PARVG) of Homo sapiens (Human).